The following is a 567-amino-acid chain: 2-isopropylmalate synthase (567 aa).

The Pyruvate carboxyltransferase domain occupies 28 to 302; sequence PQWCSVDLRD…NPELDFSDIN (275 aa). Residues aspartate 37, histidine 241, histidine 243, and asparagine 277 each coordinate Mg(2+). The segment at 435–567 is regulatory domain; sequence IRTPLQLNYH…DMDTQEEDIA (133 aa).

The protein belongs to the alpha-IPM synthase/homocitrate synthase family. LeuA type 2 subfamily. Homodimer. The cofactor is Mg(2+).

The protein localises to the cytoplasm. The catalysed reaction is 3-methyl-2-oxobutanoate + acetyl-CoA + H2O = (2S)-2-isopropylmalate + CoA + H(+). It functions in the pathway amino-acid biosynthesis; L-leucine biosynthesis; L-leucine from 3-methyl-2-oxobutanoate: step 1/4. In terms of biological role, catalyzes the condensation of the acetyl group of acetyl-CoA with 3-methyl-2-oxobutanoate (2-ketoisovalerate) to form 3-carboxy-3-hydroxy-4-methylpentanoate (2-isopropylmalate). In Acetoanaerobium sticklandii (strain ATCC 12662 / DSM 519 / JCM 1433 / CCUG 9281 / NCIMB 10654 / HF) (Clostridium sticklandii), this protein is 2-isopropylmalate synthase.